Here is a 745-residue protein sequence, read N- to C-terminus: Mitogen-activated protein kinase kinase kinase zak-1 (745 aa).

In terms of domain architecture, Protein kinase spans I31–M305. Residues I37–V45 and K63 each bind ATP. The active-site Proton acceptor is D159. The stretch at L307–V352 forms a coiled coil. An SAM domain is found at W366 to T438. Positions L693 to T745 are disordered. Residues W735–T745 are compositionally biased toward basic residues.

The protein belongs to the protein kinase superfamily. STE Ser/Thr protein kinase family. MAP kinase kinase kinase subfamily. Requires Mg(2+) as cofactor. In terms of tissue distribution, widely expressed; expressed in most tissues, including intestines, muscle and the nervous system.

Its subcellular location is the cytoplasm. The protein resides in the nucleus. It carries out the reaction L-seryl-[protein] + ATP = O-phospho-L-seryl-[protein] + ADP + H(+). The catalysed reaction is L-threonyl-[protein] + ATP = O-phospho-L-threonyl-[protein] + ADP + H(+). Functionally, stress-activated component of a protein kinase signal transduction cascade that promotes programmed cell death in response to ribotoxic stress. Acts as the proximal sensor of ribotoxic stress: directly binds to the ribosome, thereby acting as a sentinel for colliding ribosomes. Upon ribosome collisions, activates the stress-activated protein kinase signal transduction cascade, leading to programmed cell death. Acts by catalyzing phosphorylation of MAP kinase kinases, leading to activation of the JNK and MAP kinase p38 pathways. This Caenorhabditis elegans protein is Mitogen-activated protein kinase kinase kinase zak-1.